Consider the following 350-residue polypeptide: Histidinol-phosphate aminotransferase (350 aa).

The residue at position 212 (Lys-212) is an N6-(pyridoxal phosphate)lysine.

The protein belongs to the class-II pyridoxal-phosphate-dependent aminotransferase family. Histidinol-phosphate aminotransferase subfamily. In terms of assembly, homodimer. Requires pyridoxal 5'-phosphate as cofactor.

It catalyses the reaction L-histidinol phosphate + 2-oxoglutarate = 3-(imidazol-4-yl)-2-oxopropyl phosphate + L-glutamate. It functions in the pathway amino-acid biosynthesis; L-histidine biosynthesis; L-histidine from 5-phospho-alpha-D-ribose 1-diphosphate: step 7/9. The sequence is that of Histidinol-phosphate aminotransferase from Geobacter sulfurreducens (strain ATCC 51573 / DSM 12127 / PCA).